The chain runs to 360 residues: Peptide chain release factor 1 (360 aa).

Gln235 carries the N5-methylglutamine modification.

The protein belongs to the prokaryotic/mitochondrial release factor family. Post-translationally, methylated by PrmC. Methylation increases the termination efficiency of RF1.

The protein resides in the cytoplasm. Functionally, peptide chain release factor 1 directs the termination of translation in response to the peptide chain termination codons UAG and UAA. The polypeptide is Peptide chain release factor 1 (Janthinobacterium sp. (strain Marseille) (Minibacterium massiliensis)).